A 536-amino-acid polypeptide reads, in one-letter code: Vacuolar segregation protein pep7 (536 aa).

The segment at 1-31 (MQNGKRRIGVRISSNLSNHSGTNLSTSAQSD) is disordered. Residues 12–31 (ISSNLSNHSGTNLSTSAQSD) are compositionally biased toward polar residues. The C2H2-type zinc finger occupies 39-62 (TECPICGLELPNLSALNDHLDVTH). The FYVE-type 1; degenerate zinc-finger motif lies at 136–201 (PDMVCHDPMC…VCRECYEGRP (66 aa)). The Zn(2+) site is built by C158, C161, C193, C196, C281, C284, C297, C300, C305, C308, C324, and C327. An FYVE-type 2 zinc finger spans residues 275–332 (DSVVQICPECNNSFTLTRRRRHCRLCGRVICRFCVLEISLPQHPQPLLICMSCNQNYF).

Required for vacuole segregation and vacuole protein sorting. Possibly part of a complex which tethers the vacuole membrane to microtubules, either directly or via kinesin or dynein-like motor proteins. Probably functions in several interorganelle traffic pathways. This is Vacuolar segregation protein pep7 (pep7) from Schizosaccharomyces pombe (strain 972 / ATCC 24843) (Fission yeast).